Here is a 461-residue protein sequence, read N- to C-terminus: Cysteine--tRNA ligase (461 aa).

Zn(2+) is bound at residue Cys28. The 'HIGH' region motif lies at 30–40 (ITVYDLCHIGH). Zn(2+) contacts are provided by Cys209, His234, and Glu238. Residues 266-270 (KMSKS) carry the 'KMSKS' region motif. Residue Lys269 participates in ATP binding.

The protein belongs to the class-I aminoacyl-tRNA synthetase family. Monomer. Requires Zn(2+) as cofactor.

It is found in the cytoplasm. It carries out the reaction tRNA(Cys) + L-cysteine + ATP = L-cysteinyl-tRNA(Cys) + AMP + diphosphate. The polypeptide is Cysteine--tRNA ligase (Escherichia coli (strain 55989 / EAEC)).